Here is a 168-residue protein sequence, read N- to C-terminus: Large ribosomal subunit protein uL10 (168 aa).

It belongs to the universal ribosomal protein uL10 family. Part of the ribosomal stalk of the 50S ribosomal subunit. The N-terminus interacts with L11 and the large rRNA to form the base of the stalk. The C-terminus forms an elongated spine to which L12 dimers bind in a sequential fashion forming a multimeric L10(L12)X complex.

Forms part of the ribosomal stalk, playing a central role in the interaction of the ribosome with GTP-bound translation factors. In Mycoplasmopsis pulmonis (strain UAB CTIP) (Mycoplasma pulmonis), this protein is Large ribosomal subunit protein uL10 (rplJ).